The primary structure comprises 89 residues: Large ribosomal subunit protein bL31B (89 aa).

This sequence belongs to the bacterial ribosomal protein bL31 family. Type B subfamily. Part of the 50S ribosomal subunit.

The polypeptide is Large ribosomal subunit protein bL31B (Actinobacillus pleuropneumoniae serotype 5b (strain L20)).